The sequence spans 221 residues: Guanylate kinase (221 aa).

In terms of domain architecture, Guanylate kinase-like spans 20 to 198 (GSLFMVVAPS…ALAELRTVVQ (179 aa)). Residue 27–34 (APSGAGKS) coordinates ATP.

It belongs to the guanylate kinase family.

The protein resides in the cytoplasm. The enzyme catalyses GMP + ATP = GDP + ADP. Essential for recycling GMP and indirectly, cGMP. The sequence is that of Guanylate kinase from Ralstonia nicotianae (strain ATCC BAA-1114 / GMI1000) (Ralstonia solanacearum).